Reading from the N-terminus, the 99-residue chain is Protein 7.3 (99 aa).

The tract at residues 59-99 (VPEKEVSTEDEAQTESGRKKARAGGKKSLSVARSSGGGINI) is disordered.

This sequence belongs to the T7likevirus protein 7.3 family.

It localises to the virion. Plays an essential role most probably in virion tail assembly. May form a scaffold around which gp11 and gp12 polymerize. Gets ejected from the infecting particle into the bacterial cell. The sequence is that of Protein 7.3 from Escherichia phage T7 (Bacteriophage T7).